Reading from the N-terminus, the 218-residue chain is Octanoyltransferase (218 aa).

The region spanning 34–209 (ETSRDELWIV…TFSQELGYQH (176 aa)) is the BPL/LPL catalytic domain. Substrate-binding positions include 73–80 (RGGQVTYH), 140–142 (SLG), and 153–155 (GLA). The Acyl-thioester intermediate role is filled by Cys-171.

The protein belongs to the LipB family.

The protein localises to the cytoplasm. It carries out the reaction octanoyl-[ACP] + L-lysyl-[protein] = N(6)-octanoyl-L-lysyl-[protein] + holo-[ACP] + H(+). It participates in protein modification; protein lipoylation via endogenous pathway; protein N(6)-(lipoyl)lysine from octanoyl-[acyl-carrier-protein]: step 1/2. Catalyzes the transfer of endogenously produced octanoic acid from octanoyl-acyl-carrier-protein onto the lipoyl domains of lipoate-dependent enzymes. Lipoyl-ACP can also act as a substrate although octanoyl-ACP is likely to be the physiological substrate. The sequence is that of Octanoyltransferase from Shewanella loihica (strain ATCC BAA-1088 / PV-4).